We begin with the raw amino-acid sequence, 559 residues long: Neutral amino acid transporter 9 (559 aa).

Residues 1 to 118 (MANVDSDSRH…YTEGYRKNTS (118 aa)) are Cytoplasmic-facing. A helical transmembrane segment spans residues 119–139 (LVTIFMIWNTMMGTSILSIPW). The tract at residues 128–133 (TMMGTS) is important for arginine binding and amino acid transport. Ser133 contributes to the arginine binding site. Residues 140-145 (GIKQAG) lie on the Lumenal side of the membrane. The helical transmembrane segment at 146 to 166 (FTTGMCVIVLMGLLTLYCCYR) threads the bilayer. At 167–197 (VVKSRSMIVTSDTTTWEYPDVCKHYFGSFGQ) the chain is on the cytoplasmic side. The chain crosses the membrane as a helical span at residues 198–224 (WSSLLFSLVSLIGAMIVYWVLMSNFLF). Residues 225-281 (NTGKFIFNFIHHINDTDTVLSTNNSSPVICPSAGSGHPDNSSMIFYNSDTEVRLFER) lie on the Lumenal side of the membrane. N-linked (GlcNAc...) asparagine glycosylation is found at Asn238, Asn247, and Asn264. Cysteines 254 and 422 form a disulfide. A helical membrane pass occupies residues 282–298 (WWDKSKTVPFYLIGLLL). At 299-307 (PLLNFKSPS) the chain is on the cytoplasmic side. The helical transmembrane segment at 308–332 (FFSKFNILGTVSVLYLIFIVTLKAI) threads the bilayer. Residues 333–354 (RLGFHLEFHWFAPTEFFVPEIR) are Lumenal-facing. The helical transmembrane segment at 355-375 (AQFPQLTGVLTLAFFIHNCII) threads the bilayer. Topologically, residues 376 to 392 (TLLKNNKNQENNVRDLC) are cytoplasmic. A helical membrane pass occupies residues 393 to 413 (IAYMLVTLTYLYIGVLVFASF). Over 414–435 (PSPPLPKDCIEQNFLDNFPSSD) the chain is Lumenal. A helical membrane pass occupies residues 436-456 (TLSFIARICLLFQMMTVYPLL). Positions 442–452 (RICLLFQMMTV) match the CARC motif motif. A CRAC motif motif is present at residues 455–461 (LLGYLAR). Over 457–477 (GYLARVQLLGHIFGDIYPSIF) the chain is Cytoplasmic. The chain crosses the membrane as a helical span at residues 478–498 (HVLILNLIIVGAGVTMACFYP). The Lumenal segment spans residues 499-505 (NIGGIIR). A helical transmembrane segment spans residues 506–526 (YSGAACGLAFVFIYPSLIYIL). Over 527-538 (SQHQEERLTWPK) the chain is Cytoplasmic. A helical membrane pass occupies residues 539–559 (LVFHIIIIILGLANLIAQFFM).

It belongs to the amino acid/polyamine transporter 2 family. SLC38A9 subfamily. Associated component of the Ragulator complex (composed of LAMTOR1, LAMTOR2, LAMTOR3, LAMTOR4 and LAMTOR5). Associated component of the Rag GTPases heterodimers (composed of RRAGA, RRAGB, RRAGC and RRAGD); this interaction is independent of the Ragulator complex but depends on the nucleotide loading state of the Rag GTPase heterodimer. Interacts with TM4SF5. Interacts with NPC1; this interaction inhibits cholesterol-mediated mTORC1 activation via its sterol transport activity. Post-translationally, glycosylated.

Its subcellular location is the lysosome membrane. The protein localises to the late endosome membrane. It carries out the reaction L-leucine(in) = L-leucine(out). The enzyme catalyses L-tyrosine(in) = L-tyrosine(out). It catalyses the reaction L-glutamine(out) = L-glutamine(in). The catalysed reaction is L-asparagine(out) = L-asparagine(in). Functionally, lysosomal amino acid transporter involved in the activation of mTORC1 in response to amino acid levels. Probably acts as an amino acid sensor of the Rag GTPases and Ragulator complexes, 2 complexes involved in amino acid sensing and activation of mTORC1, a signaling complex promoting cell growth in response to growth factors, energy levels, and amino acids. Following activation by amino acids, the Ragulator and Rag GTPases function as a scaffold recruiting mTORC1 to lysosomes where it is in turn activated. SLC38A9 mediates transport of amino acids with low capacity and specificity with a slight preference for polar amino acids. Acts as an arginine sensor. Following activation by arginine binding, mediates transport of L-glutamine, leucine and tyrosine with high efficiency, and is required for the efficient utilization of these amino acids after lysosomal protein degradation. However, the transport mechanism is not well defined and the role of sodium is not clear. Can disassemble the lysosomal folliculin complex (LFC), and thereby triggers GAP activity of FLCN:FNIP2 toward RRAGC. Acts as an cholesterol sensor that conveys increases in lysosomal cholesterol, leading to lysosomal recruitment and activation of mTORC1 via the Rag GTPases. Guanine exchange factor (GEF) that, upon arginine binding, stimulates GDP release from RRAGA and therefore activates the Rag GTPase heterodimer and the mTORC1 pathway in response to nutrient sufficiency. In Rattus norvegicus (Rat), this protein is Neutral amino acid transporter 9.